Here is a 1986-residue protein sequence, read N- to C-terminus: Protein Shroom3 (1986 aa).

The disordered stretch occupies residues 1–21 (MKTPENLEEPSATPNPSRTPT). Residues 24–109 (FVYLEALLEG…TLRLVVRRDV (86 aa)) form the PDZ domain. 5 disordered regions span residues 152–199 (CSEP…SSTS), 211–239 (RSPD…LLSP), 265–285 (TSSS…RSGS), 342–463 (QGCA…QPLL), and 564–1055 (NEDS…RRIF). Ser212 carries the post-translational modification Phosphoserine. Polar residues-rich tracts occupy residues 357–376 (PSPS…TDNL) and 415–425 (PQTNSSGSQKT). A compositionally biased stretch (basic and acidic residues) spans 430–440 (DQLHTVPERSP). Phosphoserine is present on residues Ser439 and Ser443. Polar residues predominate over residues 595–607 (ACSNHHSLSSPQA). Over residues 630 to 645 (QEDHNANLRQKVEREG) the composition is skewed to basic and acidic residues. Polar residues predominate over residues 653 to 677 (NSGRTRSAFSSLQNIPESLRRQSNV). Residues 747–761 (SGASQRRLSSSSSAA) are compositionally biased toward low complexity. Basic and acidic residues predominate over residues 774 to 785 (KVSRIEEREQGR). 2 stretches are compositionally biased toward low complexity: residues 796 to 814 (YGPG…TSSS) and 865 to 874 (DGRGPPARGG). Position 888 is a phosphoserine (Ser888). Over residues 895–908 (EAEREASWSEDRPG) the composition is skewed to basic and acidic residues. Thr909 is subject to Phosphothreonine. A phosphoserine mark is found at Ser912 and Ser969. Residues 927 to 1023 (IKDAQSRVLG…SEPEKMNEVG (97 aa)) form the ASD1 domain. Basic and acidic residues predominate over residues 1004–1020 (LTVEQKKRSYSEPEKMN). Residues Ser1063 and Ser1066 each carry the phosphoserine modification. Disordered regions lie at residues 1083–1102 (YIQR…PEAG), 1107–1223 (AQSA…AEDL), 1304–1425 (ATVA…PPWV), and 1446–1654 (ANLK…KTSE). Positions 1114 to 1127 (AGPAAPDGPGLASA) are enriched in low complexity. Positions 1134–1146 (REPEALPRKEHTH) are enriched in basic and acidic residues. Residues Trp1175, Val1179, and Ser1219 each carry the phosphoserine modification. Residues 1307-1318 (ASSAPPESSGAA) are compositionally biased toward low complexity. Phosphoserine occurs at positions 1350 and 1354. Polar residues predominate over residues 1366–1399 (YRSQLAMDQQTGQQPPSSPASAVTQPTSPRSPEL). Over residues 1455–1469 (PSRPSSCSTSDPDTP) the composition is skewed to low complexity. Positions 1513–1524 (LPPPPPPSPPSE) are enriched in pro residues. A compositionally biased stretch (polar residues) spans 1581 to 1630 (EGSQIMTATPPQTSAKGSEAESNTPSSASAQPQLNGSPGKQLCPSQTRNL). Positions 1634–1654 (PVERTQDLGKKTHAEPQKTSE) are enriched in basic and acidic residues. The ASD2 domain occupies 1659–1947 (EALAKEIVHQ…QVRCLLESLP (289 aa)). Residues 1844–1890 (RLARVENVLRGLGEDASKEERSSLNEKRKVLAGQHEDARELKENLDR) are a coiled coil.

The protein belongs to the shroom family. Interacts with F-actin. Interacts with ROCK1.

The protein resides in the cell junction. Its subcellular location is the adherens junction. It is found in the cytoplasm. The protein localises to the cytoskeleton. It localises to the apical cell membrane. In terms of biological role, controls cell shape changes in the neuroepithelium during neural tube closure. Induces apical constriction in epithelial cells by promoting the apical accumulation of F-actin and myosin II, and probably by bundling stress fibers. Induces apicobasal cell elongation by redistributing gamma-tubulin and directing the assembly of robust apicobasal microtubule arrays. In Mus musculus (Mouse), this protein is Protein Shroom3 (Shroom3).